Reading from the N-terminus, the 440-residue chain is Proline--tRNA ligase (440 aa).

It belongs to the class-II aminoacyl-tRNA synthetase family. ProS type 2 subfamily. In terms of assembly, homodimer.

The protein resides in the cytoplasm. It catalyses the reaction tRNA(Pro) + L-proline + ATP = L-prolyl-tRNA(Pro) + AMP + diphosphate. Catalyzes the attachment of proline to tRNA(Pro) in a two-step reaction: proline is first activated by ATP to form Pro-AMP and then transferred to the acceptor end of tRNA(Pro). This Rhizobium etli (strain ATCC 51251 / DSM 11541 / JCM 21823 / NBRC 15573 / CFN 42) protein is Proline--tRNA ligase.